Consider the following 393-residue polypeptide: Na(+)/H(+) antiporter NhaA (393 aa).

12 helical membrane-spanning segments follow: residues A23–F43, L58–L78, M96–L116, G126–G146, V155–F175, A178–M198, M201–F221, G224–P244, V265–L285, I298–I318, L334–L354, and I367–A387.

It belongs to the NhaA Na(+)/H(+) (TC 2.A.33) antiporter family.

The protein resides in the cell inner membrane. The catalysed reaction is Na(+)(in) + 2 H(+)(out) = Na(+)(out) + 2 H(+)(in). Its function is as follows. Na(+)/H(+) antiporter that extrudes sodium in exchange for external protons. This is Na(+)/H(+) antiporter NhaA from Brucella canis (strain ATCC 23365 / NCTC 10854 / RM-666).